The sequence spans 418 residues: Serine hydroxymethyltransferase (418 aa).

Residues L121 and 125-127 (GHL) contribute to the (6S)-5,6,7,8-tetrahydrofolate site. Position 230 is an N6-(pyridoxal phosphate)lysine (K230). (6S)-5,6,7,8-tetrahydrofolate is bound at residue 355 to 357 (SPF).

The protein belongs to the SHMT family. As to quaternary structure, homodimer. The cofactor is pyridoxal 5'-phosphate.

Its subcellular location is the cytoplasm. The enzyme catalyses (6R)-5,10-methylene-5,6,7,8-tetrahydrofolate + glycine + H2O = (6S)-5,6,7,8-tetrahydrofolate + L-serine. It participates in one-carbon metabolism; tetrahydrofolate interconversion. The protein operates within amino-acid biosynthesis; glycine biosynthesis; glycine from L-serine: step 1/1. In terms of biological role, catalyzes the reversible interconversion of serine and glycine with tetrahydrofolate (THF) serving as the one-carbon carrier. This reaction serves as the major source of one-carbon groups required for the biosynthesis of purines, thymidylate, methionine, and other important biomolecules. Also exhibits THF-independent aldolase activity toward beta-hydroxyamino acids, producing glycine and aldehydes, via a retro-aldol mechanism. This chain is Serine hydroxymethyltransferase, found in Streptococcus agalactiae serotype III (strain NEM316).